Here is a 167-residue protein sequence, read N- to C-terminus: NADH-quinone oxidoreductase subunit B 2 (167 aa).

Cys-38, Cys-39, Cys-103, and Cys-132 together coordinate [4Fe-4S] cluster.

It belongs to the complex I 20 kDa subunit family. As to quaternary structure, NDH-1 is composed of 14 different subunits. Subunits NuoB, C, D, E, F, and G constitute the peripheral sector of the complex. It depends on [4Fe-4S] cluster as a cofactor.

The protein resides in the cell inner membrane. It carries out the reaction a quinone + NADH + 5 H(+)(in) = a quinol + NAD(+) + 4 H(+)(out). In terms of biological role, NDH-1 shuttles electrons from NADH, via FMN and iron-sulfur (Fe-S) centers, to quinones in the respiratory chain. The immediate electron acceptor for the enzyme in this species is believed to be ubiquinone. Couples the redox reaction to proton translocation (for every two electrons transferred, four hydrogen ions are translocated across the cytoplasmic membrane), and thus conserves the redox energy in a proton gradient. The chain is NADH-quinone oxidoreductase subunit B 2 from Rhizobium meliloti (strain 1021) (Ensifer meliloti).